The chain runs to 85 residues: U4-theraphotoxin-Hhn1a (85 aa).

The N-terminal stretch at 1–22 is a signal peptide; that stretch reads MKVTLIAILTCAAVLVLHTTAA. Positions 23–48 are excised as a propeptide; that stretch reads EELEAEGQLMEVGMPDTELAAVDEER. 3 disulfides stabilise this stretch: Cys52/Cys66, Cys56/Cys77, and Cys71/Cys82.

This sequence belongs to the neurotoxin 12 (Hwtx-2) family. 02 (Hwtx-2) subfamily. As to quaternary structure, monomer. In terms of tissue distribution, expressed by the venom gland.

It is found in the secreted. In terms of biological role, neurotoxin active on both insects and mammals. In Cyriopagopus hainanus (Chinese bird spider), this protein is U4-theraphotoxin-Hhn1a.